Consider the following 165-residue polypeptide: Probable cell wall protein PGA15 (165 aa).

A signal peptide spans 1–16; sequence MKFIIILFTLISIVTA. The GPI-anchor amidated serine moiety is linked to residue serine 143. Positions 144–165 are cleaved as a propeptide — removed in mature form; that stretch reads GAANYLTSFSIGTFFVFVLGLI.

This sequence belongs to the IHD1 family. The GPI-anchor is attached to the protein in the endoplasmic reticulum and serves to target the protein to the cell surface. There, the glucosamine-inositol phospholipid moiety is cleaved off and the GPI-modified mannoprotein is covalently attached via its lipidless GPI glycan remnant to the 1,6-beta-glucan of the outer cell wall layer.

It localises to the secreted. The protein localises to the cell wall. The protein resides in the membrane. Probable GPI-anchored cell wall protein that may be involved in cell wall organization, hyphal growth, as well as in virulence. This chain is Probable cell wall protein PGA15 (PGA15), found in Candida albicans (strain SC5314 / ATCC MYA-2876) (Yeast).